We begin with the raw amino-acid sequence, 216 residues long: Ras-related protein Rab-5C (216 aa).

GTP is bound by residues S30, A31, G33, K34, S35, S36, H47, E48, T53, and G79. Residue S35 coordinates Mg(2+). Short sequence motifs (switch) lie at residues 45-57 and 78-94; these read QFHEYQESTIGAA and AGQERYHSLAPMYYRGA. Position 53 (T53) interacts with Mg(2+). S85 carries the phosphoserine modification. Residues N134, K135, D137, A165, and K166 each coordinate GTP. The tract at residues 185–216 is disordered; it reads NEPQNAAGAPSRNRGVDLQENSPASRSQCCSN. The span at 203–216 shows a compositional bias: polar residues; the sequence is QENSPASRSQCCSN. S-geranylgeranyl cysteine attachment occurs at residues C213 and C214.

This sequence belongs to the small GTPase superfamily. Rab family. In terms of assembly, interacts with EEA1 and INCA1. Interacts with GDI1, GDI2, CHML and CHM; phosphorylation at Ser-85 disrupts this interaction. Mg(2+) serves as cofactor. Post-translationally, phosphorylation of Ser-85 in the switch II region by LRRK2 prevents the association of RAB regulatory proteins, including CHM, CHML and RAB GDP dissociation inhibitors GDI1 and GDI2.

Its subcellular location is the cell membrane. The protein resides in the early endosome membrane. It is found in the melanosome. The enzyme catalyses GTP + H2O = GDP + phosphate + H(+). Regulated by guanine nucleotide exchange factors (GEFs) which promote the exchange of bound GDP for free GTP. Regulated by GTPase activating proteins (GAPs) which increase the GTP hydrolysis activity. Inhibited by GDP dissociation inhibitors (GDIs). Functionally, the small GTPases Rab are key regulators of intracellular membrane trafficking, from the formation of transport vesicles to their fusion with membranes. Rabs cycle between an inactive GDP-bound form and an active GTP-bound form that is able to recruit to membranes different sets of downstream effectors directly responsible for vesicle formation, movement, tethering and fusion. The polypeptide is Ras-related protein Rab-5C (RAB5C) (Canis lupus familiaris (Dog)).